The following is a 309-amino-acid chain: Heme A synthase (309 aa).

At 1-6 (MTKKLK) the chain is on the cytoplasmic side. The helical transmembrane segment at 7–27 (ILSVISTICMIPLLLGGALVT) threads the bilayer. Topologically, residues 28-62 (KTGSADGCGNSWPLCEGQFLPTKISFEMFIELSHR) are extracellular. A disulfide bond links Cys-35 and Cys-42. Residue Glu-58 is part of the active site. His-61 contributes to the heme o binding site. A helical transmembrane segment spans residues 63–83 (GVTGVVGILIVYLTYLVWKEL). The Cytoplasmic segment spans residues 84–88 (RHNKE). The helical transmembrane segment at 89–109 (VVFLAFSALSLMILQALIGAA) threads the bilayer. Residues 110-123 (AVVWGQSDFALATH) lie on the Extracellular side of the membrane. His-123 contributes to the heme o binding site. A helical membrane pass occupies residues 124-144 (FGISLVCFAAVFLLMLQLFEI). Residues 145-159 (DKKLHTEDIHINKTH) are Cytoplasmic-facing. The chain crosses the membrane as a helical span at residues 160 to 180 (RIEIYAISFYTMCVVYSGALV). Topologically, residues 181-211 (RHTDSNLACRDWPLCVNNSSFGISDYNFYQW) are extracellular. Cys-189 and Cys-195 form a disulfide bridge. The helical transmembrane segment at 212 to 232 (VQMGHRLAAGILFIWTVILTI) threads the bilayer. His-216 provides a ligand contact to heme b. The Cytoplasmic segment spans residues 233 to 247 (RMVKHYKNSKVFYWS). Residues 248 to 268 (WLITLGLITLQVLFGALIIFT) traverse the membrane as a helical segment. Residues 269–271 (SLN) lie on the Extracellular side of the membrane. Residues 272–292 (LAIALFHALFITCYFGMLSFF) form a helical membrane-spanning segment. A heme b-binding site is contributed by His-278. Over 293-309 (MHLSFRAKRREKYSNQS) the chain is Cytoplasmic.

It belongs to the COX15/CtaA family. Type 1 subfamily. As to quaternary structure, interacts with CtaB. Heme b is required as a cofactor.

The protein resides in the cell membrane. The enzyme catalyses Fe(II)-heme o + 2 A + H2O = Fe(II)-heme a + 2 AH2. It functions in the pathway porphyrin-containing compound metabolism; heme A biosynthesis; heme A from heme O: step 1/1. Its function is as follows. Catalyzes the conversion of heme O to heme A by two successive hydroxylations of the methyl group at C8. The first hydroxylation forms heme I, the second hydroxylation results in an unstable dihydroxymethyl group, which spontaneously dehydrates, resulting in the formyl group of heme A. This Oceanobacillus iheyensis (strain DSM 14371 / CIP 107618 / JCM 11309 / KCTC 3954 / HTE831) protein is Heme A synthase.